The following is a 553-amino-acid chain: Dihydroxy-acid dehydratase 1 (553 aa).

D78 contributes to the Mg(2+) binding site. [2Fe-2S] cluster is bound at residue C119. The Mg(2+) site is built by D120 and K121. The residue at position 121 (K121) is an N6-carboxylysine. Residue C191 coordinates [2Fe-2S] cluster. E444 serves as a coordination point for Mg(2+). S470 functions as the Proton acceptor in the catalytic mechanism.

Belongs to the IlvD/Edd family. In terms of assembly, homodimer. The cofactor is [2Fe-2S] cluster. Requires Mg(2+) as cofactor.

The enzyme catalyses (2R)-2,3-dihydroxy-3-methylbutanoate = 3-methyl-2-oxobutanoate + H2O. It carries out the reaction (2R,3R)-2,3-dihydroxy-3-methylpentanoate = (S)-3-methyl-2-oxopentanoate + H2O. It participates in amino-acid biosynthesis; L-isoleucine biosynthesis; L-isoleucine from 2-oxobutanoate: step 3/4. The protein operates within amino-acid biosynthesis; L-valine biosynthesis; L-valine from pyruvate: step 3/4. Its function is as follows. Functions in the biosynthesis of branched-chain amino acids. Catalyzes the dehydration of (2R,3R)-2,3-dihydroxy-3-methylpentanoate (2,3-dihydroxy-3-methylvalerate) into 2-oxo-3-methylpentanoate (2-oxo-3-methylvalerate) and of (2R)-2,3-dihydroxy-3-methylbutanoate (2,3-dihydroxyisovalerate) into 2-oxo-3-methylbutanoate (2-oxoisovalerate), the penultimate precursor to L-isoleucine and L-valine, respectively. In Methanosarcina acetivorans (strain ATCC 35395 / DSM 2834 / JCM 12185 / C2A), this protein is Dihydroxy-acid dehydratase 1.